The primary structure comprises 507 residues: Chromosomal replication initiator protein DnaA (507 aa).

The tract at residues 1-112 (MTDDPGSGFT…PATDEADDTT (112 aa)) is domain I, interacts with DnaA modulators. Residues 99-155 (RIAPPATDEADDTTVPPSENPATTSPDTTTDNDEIDDSAAARGDNQHSWPSYFTERP) are disordered. Polar residues predominate over residues 113 to 127 (VPPSENPATTSPDTT). Residues 113–166 (VPPSENPATTSPDTTTDNDEIDDSAAARGDNQHSWPSYFTERPHNTDSATAGVT) are domain II. The interval 167–383 (SLNRRYTFDT…GALIRVTAFA (217 aa)) is domain III, AAA+ region. Positions 211, 213, 214, and 215 each coordinate ATP. The tract at residues 384–507 (SLNKTPIDKA…TTRIRQRSKR (124 aa)) is domain IV, binds dsDNA.

This sequence belongs to the DnaA family. In terms of assembly, oligomerizes as a right-handed, spiral filament on DNA at oriC.

It is found in the cytoplasm. In terms of biological role, plays an essential role in the initiation and regulation of chromosomal replication. ATP-DnaA binds to the origin of replication (oriC) to initiate formation of the DNA replication initiation complex once per cell cycle. Binds the DnaA box (a 9 base pair repeat at the origin) and separates the double-stranded (ds)DNA. Forms a right-handed helical filament on oriC DNA; dsDNA binds to the exterior of the filament while single-stranded (ss)DNA is stabiized in the filament's interior. The ATP-DnaA-oriC complex binds and stabilizes one strand of the AT-rich DNA unwinding element (DUE), permitting loading of DNA polymerase. After initiation quickly degrades to an ADP-DnaA complex that is not apt for DNA replication. Binds acidic phospholipids. The chain is Chromosomal replication initiator protein DnaA from Mycobacterium tuberculosis (strain ATCC 25177 / H37Ra).